Consider the following 1827-residue polypeptide: Chromodomain-helicase-DNA-binding protein 2 (1827 aa).

The segment covering 1–14 (MMRNKDKSQEEDSS) has biased composition (basic and acidic residues). Residues 1 to 264 (MMRNKDKSQE…EQQDNSETIE (264 aa)) are disordered. The segment covering 15 to 75 (LHSNASSRSA…SESESAGSKS (61 aa)) has biased composition (low complexity). Basic and acidic residues-rich tracts occupy residues 81-101 (EAKE…KMWE), 115-128 (SRQE…KEEA), and 146-155 (KKQEKWKQDP). Residues 175-204 (GKARRPVPRRTVPKPQVKKQPKIQRGKRKK) show a composition bias toward basic residues. Phosphoserine occurs at positions 207 and 208. The segment covering 234-258 (EDDDFETDSDDLIEMTGEGGDEQQD) has biased composition (acidic residues). Residue Thr240 is modified to Phosphothreonine. Phosphoserine is present on Ser242. Chromo domains are found at residues 261–353 (ETIE…QWLG) and 378–456 (QIVE…IPTR). Residues 496–666 (AHSWCKSNSV…WSLLHFIMPE (171 aa)) form the Helicase ATP-binding domain. An ATP-binding site is contributed by 509-516 (DEMGLGKT). Residues 617–620 (DEAH) carry the DEAH box motif. Residues 795–946 (LLDKLLTRLR…HLVIQRMDTT (152 aa)) enclose the Helicase C-terminal domain. 4 disordered regions span residues 1030-1124 (EDEE…RSVR), 1329-1465 (GTVA…DDLD), 1556-1638 (HKKR…ADRG), and 1679-1827 (HMDA…VRKT). Positions 1037 to 1065 (ERPHKDWDEIIPEEQRKKVEEEERQKELE) are enriched in basic and acidic residues. 4 positions are modified to phosphoserine: Ser1085, Ser1087, Ser1365, and Ser1386. Basic and acidic residues predominate over residues 1347 to 1371 (KKENKAPRLKDEHGLEPASPRHSDN). Composition is skewed to basic and acidic residues over residues 1396-1431 (ENKE…KGGD) and 1565-1574 (EQKKKDDSLG). The segment at 1464 to 1566 (LDQETFSICK…KKRSQEEEEQ (103 aa)) is CHD1 helical C-terminal domain (CHCT). The segment covering 1584-1601 (SGSSRDSLISQSHTSHNL) has biased composition (polar residues). Basic and acidic residues-rich tracts occupy residues 1697-1719 (RPYE…DRHH), 1738-1748 (QDFRRMSDHRP), 1759-1771 (DHYR…KLGE), and 1794-1813 (SPHD…RSLE). The residue at position 1806 (Ser1806) is a Phosphoserine.

Interacts with MYOD1. Interacts with histone H3.3. As to expression, widely expressed.

It localises to the nucleus. The enzyme catalyses ATP + H2O = ADP + phosphate + H(+). ATP-dependent chromatin-remodeling factor that specifically binds to the promoter of target genes, leading to chromatin remodeling, possibly by promoting deposition of histone H3.3. Involved in myogenesis via interaction with MYOD1: binds to myogenic gene regulatory sequences and mediates incorporation of histone H3.3 prior to the onset of myogenic gene expression, promoting their expression. In Mus musculus (Mouse), this protein is Chromodomain-helicase-DNA-binding protein 2 (Chd2).